A 76-amino-acid polypeptide reads, in one-letter code: Cyclin-dependent kinases regulatory subunit (76 aa).

Belongs to the CKS family. Forms a homohexamer that can probably bind six kinase subunits.

In terms of biological role, binds to the catalytic subunit of the cyclin dependent kinases and is essential for their biological function. The protein is Cyclin-dependent kinases regulatory subunit of Patella vulgata (Common limpet).